A 244-amino-acid polypeptide reads, in one-letter code: Cell division protein ZapD (244 aa).

It belongs to the ZapD family. In terms of assembly, interacts with FtsZ.

The protein resides in the cytoplasm. Cell division factor that enhances FtsZ-ring assembly. Directly interacts with FtsZ and promotes bundling of FtsZ protofilaments, with a reduction in FtsZ GTPase activity. The polypeptide is Cell division protein ZapD (Shewanella oneidensis (strain ATCC 700550 / JCM 31522 / CIP 106686 / LMG 19005 / NCIMB 14063 / MR-1)).